Reading from the N-terminus, the 94-residue chain is Aspartyl/glutamyl-tRNA(Asn/Gln) amidotransferase subunit C (94 aa).

The protein belongs to the GatC family. In terms of assembly, heterotrimer of A, B and C subunits.

The catalysed reaction is L-glutamyl-tRNA(Gln) + L-glutamine + ATP + H2O = L-glutaminyl-tRNA(Gln) + L-glutamate + ADP + phosphate + H(+). It carries out the reaction L-aspartyl-tRNA(Asn) + L-glutamine + ATP + H2O = L-asparaginyl-tRNA(Asn) + L-glutamate + ADP + phosphate + 2 H(+). In terms of biological role, allows the formation of correctly charged Asn-tRNA(Asn) or Gln-tRNA(Gln) through the transamidation of misacylated Asp-tRNA(Asn) or Glu-tRNA(Gln) in organisms which lack either or both of asparaginyl-tRNA or glutaminyl-tRNA synthetases. The reaction takes place in the presence of glutamine and ATP through an activated phospho-Asp-tRNA(Asn) or phospho-Glu-tRNA(Gln). The polypeptide is Aspartyl/glutamyl-tRNA(Asn/Gln) amidotransferase subunit C (Heliobacterium modesticaldum (strain ATCC 51547 / Ice1)).